Consider the following 924-residue polypeptide: Alpha-actinin, sarcomeric (924 aa).

Positions 1 to 250 (MMMENGLSME…IMTYVSCYYH (250 aa)) are actin-binding. 2 consecutive Calponin-homology (CH) domains span residues 34–138 (KQQK…LRFA) and 147–253 (MTAK…HAFQ). Spectrin repeat units follow at residues 251-395 (AFQG…TVSD), 396-510 (ISNS…RCQR), 511-631 (ICDQ…TAND), and 632-744 (MTRK…TMET). 2 consecutive EF-hand domains span residues 778 to 813 (EQLNEFRSSFNHFDKNRTGRLSPEEFKSCLVSLGYS) and 819 to 854 (QGDLDFQRILAVVDPNNTGYVHFDAFLDFMTRESTD). The Ca(2+) site is built by Asp-791, Asn-793, Thr-795, Arg-797, and Glu-802.

The protein belongs to the alpha-actinin family. In terms of assembly, homodimer; antiparallel. Interacts with Smn; the interaction occurs in adult thoracic tissues. Larval muscle isoform is expressed in the larval body wall, adult muscles of the head and abdomen and supercontractile muscles of the larva and adult. Adult muscle isoform accumulates within adult fibrillar and tubular muscles.

It localises to the cytoplasm. It is found in the myofibril. The protein localises to the sarcomere. Its subcellular location is the z line. Its function is as follows. F-actin cross-linking protein which is thought to anchor actin to a variety of intracellular structures. This is a bundling protein. This is Alpha-actinin, sarcomeric (Actn) from Drosophila melanogaster (Fruit fly).